Reading from the N-terminus, the 1330-residue chain is ESX-3 secretion system protein EccC3 (1330 aa).

2 helical membrane-spanning segments follow: residues 43 to 63 (LPYL…ATGM) and 65 to 85 (VISP…TALY). FtsK domains are found at residues 456 to 662 (GEPL…SVSR), 811 to 1000 (RDPL…RDSN), and 1090 to 1280 (LAPV…ADSG). ATP-binding positions include 479–486 (GMTGSGKS), 829–836 (GGPKSGKS), and 1107–1114 (GDARSGKT).

Part of the ESX-3 / type VII secretion system (T7SS), which is composed of cytosolic and membrane components. The ESX-3 membrane complex is composed of EccB3, EccC3, EccD3 and EccE3.

It is found in the cell inner membrane. In terms of biological role, part of the ESX-3 specialized secretion system, which is important for iron and zinc uptake or homeostasis. In Mycobacterium tuberculosis (strain CDC 1551 / Oshkosh), this protein is ESX-3 secretion system protein EccC3.